The chain runs to 247 residues: Enolase-phosphatase E1 (247 aa).

Mg(2+) contacts are provided by D12 and E14. Residues 141–142 and K175 each bind substrate; that span reads SS. D200 lines the Mg(2+) pocket.

It belongs to the HAD-like hydrolase superfamily. MasA/MtnC family. In terms of assembly, monomer. Mg(2+) is required as a cofactor.

It localises to the cytoplasm. The protein localises to the nucleus. The catalysed reaction is 5-methylsulfanyl-2,3-dioxopentyl phosphate + H2O = 1,2-dihydroxy-5-(methylsulfanyl)pent-1-en-3-one + phosphate. It participates in amino-acid biosynthesis; L-methionine biosynthesis via salvage pathway; L-methionine from S-methyl-5-thio-alpha-D-ribose 1-phosphate: step 3/6. Its pathway is amino-acid biosynthesis; L-methionine biosynthesis via salvage pathway; L-methionine from S-methyl-5-thio-alpha-D-ribose 1-phosphate: step 4/6. Functionally, bifunctional enzyme that catalyzes the enolization of 2,3-diketo-5-methylthiopentyl-1-phosphate (DK-MTP-1-P) into the intermediate 2-hydroxy-3-keto-5-methylthiopentenyl-1-phosphate (HK-MTPenyl-1-P), which is then dephosphorylated to form the acireductone 1,2-dihydroxy-3-keto-5-methylthiopentene (DHK-MTPene). The chain is Enolase-phosphatase E1 from Drosophila willistoni (Fruit fly).